We begin with the raw amino-acid sequence, 164 residues long: UPF0304 protein YfbU (164 aa).

It belongs to the UPF0304 family.

The sequence is that of UPF0304 protein YfbU from Salmonella enteritidis PT4 (strain P125109).